We begin with the raw amino-acid sequence, 963 residues long: Glycine dehydrogenase (decarboxylating) (963 aa).

Lys-710 is modified (N6-(pyridoxal phosphate)lysine).

Belongs to the GcvP family. In terms of assembly, the glycine cleavage system is composed of four proteins: P, T, L and H. Pyridoxal 5'-phosphate serves as cofactor.

It carries out the reaction N(6)-[(R)-lipoyl]-L-lysyl-[glycine-cleavage complex H protein] + glycine + H(+) = N(6)-[(R)-S(8)-aminomethyldihydrolipoyl]-L-lysyl-[glycine-cleavage complex H protein] + CO2. Its function is as follows. The glycine cleavage system catalyzes the degradation of glycine. The P protein binds the alpha-amino group of glycine through its pyridoxal phosphate cofactor; CO(2) is released and the remaining methylamine moiety is then transferred to the lipoamide cofactor of the H protein. This chain is Glycine dehydrogenase (decarboxylating), found in Pseudoalteromonas translucida (strain TAC 125).